A 552-amino-acid polypeptide reads, in one-letter code: Probable glucomannan 4-beta-mannosyltransferase 10 (552 aa).

Residues 62–82 (IVPLFKCLVAFCLIISLLVFI) form a helical membrane-spanning segment. D161 is a catalytic residue. Residues D220 and D222 each coordinate substrate. The active site involves D314. Helical transmembrane passes span 393 to 413 (IIVHCFTFIFYCVILPTSVFF), 430 to 450 (ITLCIVIATPRSFYLVIFWIL), 509 to 529 (EIMVGIYILCCACYGLFFGNT), and 530 to 550 (LLYLYLFMQAVAFLISGVGFV).

This sequence belongs to the glycosyltransferase 2 family. Plant cellulose synthase-like A subfamily.

The protein localises to the golgi apparatus membrane. It carries out the reaction GDP-mannose + (glucomannan)n = GDP + (glucomannan)n+1.. Functionally, probable mannan synthase which consists of a 4-beta-mannosyltransferase activity on mannan using GDP-mannose. The beta-1,4-mannan product is the backbone for galactomannan synthesis by galactomannan galactosyltransferase. Galactomannan is a noncellulosic polysaccharides of plant cell wall. This Arabidopsis thaliana (Mouse-ear cress) protein is Probable glucomannan 4-beta-mannosyltransferase 10.